The chain runs to 130 residues: Small ribosomal subunit protein uS9 (130 aa).

The tract at residues 111–130 is disordered; that stretch reads VERKKPGLKKARKASQFSKR. Over residues 116 to 130 the composition is skewed to basic residues; sequence PGLKKARKASQFSKR.

The protein belongs to the universal ribosomal protein uS9 family.

This Lactococcus lactis subsp. lactis (strain IL1403) (Streptococcus lactis) protein is Small ribosomal subunit protein uS9.